Reading from the N-terminus, the 301-residue chain is Asialoglycoprotein receptor 2 (301 aa).

The disordered stretch occupies residues 1-43 (MEKDCQDIQQLDSEENDHQLSGDDEHGSHVQDPRIENPHWKGQ). Over 1-58 (MEKDCQDIQQLDSEENDHQLSGDDEHGSHVQDPRIENPHWKGQPLSRPFPQRLCSTFR) the chain is Cytoplasmic. Residue S13 is modified to Phosphoserine. Over residues 16–39 (NDHQLSGDDEHGSHVQDPRIENPH) the composition is skewed to basic and acidic residues. C54 carries S-palmitoyl cysteine lipidation. A helical; Signal-anchor for type II membrane protein membrane pass occupies residues 59–79 (LSLLALAFNILLLVVICVVSS). The Extracellular portion of the chain corresponds to 80–301 (QSIQLQEEFR…VCEKRRNITH (222 aa)). N97 and N165 each carry an N-linked (GlcNAc...) asparagine glycan. Positions 169-295 (CCPVNWVEFG…QQVNRWVCEK (127 aa)) constitute a C-type lectin domain. Cystine bridges form between C170–C181, C198–C293, and C271–C285. N298 is a glycosylation site (N-linked (GlcNAc...) asparagine).

Interacts with LASS2. In terms of tissue distribution, expressed exclusively in hepatic parenchymal cells.

Its subcellular location is the membrane. Mediates the endocytosis of plasma glycoproteins to which the terminal sialic acid residue on their complex carbohydrate moieties has been removed. The receptor recognizes terminal galactose and N-acetylgalactosamine units. After ligand binding to the receptor, the resulting complex is internalized and transported to a sorting organelle, where receptor and ligand are disassociated. The receptor then returns to the cell membrane surface. In Mus musculus (Mouse), this protein is Asialoglycoprotein receptor 2 (Asgr2).